A 523-amino-acid chain; its full sequence is Glutamate--cysteine ligase, chloroplastic (523 aa).

A disulfide bond links Cys187 and Cys407.

This sequence belongs to the carboxylate-amine ligase family. Glutamate--cysteine ligase type 2 subfamily. In terms of assembly, homodimer or monomer when oxidized or reduced, respectively. In terms of processing, the Cys-187-Cys-407 disulfide bridge is known to modulate the enzyme activity according to the redox status. The oxidized form constitutes the active enzyme.

It localises to the plastid. Its subcellular location is the chloroplast. The enzyme catalyses L-cysteine + L-glutamate + ATP = gamma-L-glutamyl-L-cysteine + ADP + phosphate + H(+). The protein operates within sulfur metabolism; glutathione biosynthesis; glutathione from L-cysteine and L-glutamate: step 1/2. The sequence is that of Glutamate--cysteine ligase, chloroplastic (GSH1) from Solanum lycopersicum (Tomato).